A 120-amino-acid polypeptide reads, in one-letter code: NAD(P)H-quinone oxidoreductase subunit 3, chloroplastic (120 aa).

3 helical membrane passes run 9–29, 64–84, and 88–108; these read IFWA…LISG, MFAL…PWAM, and VLGV…ILGL.

The protein belongs to the complex I subunit 3 family. As to quaternary structure, NDH is composed of at least 16 different subunits, 5 of which are encoded in the nucleus.

The protein localises to the plastid. The protein resides in the chloroplast thylakoid membrane. The catalysed reaction is a plastoquinone + NADH + (n+1) H(+)(in) = a plastoquinol + NAD(+) + n H(+)(out). It catalyses the reaction a plastoquinone + NADPH + (n+1) H(+)(in) = a plastoquinol + NADP(+) + n H(+)(out). Functionally, NDH shuttles electrons from NAD(P)H:plastoquinone, via FMN and iron-sulfur (Fe-S) centers, to quinones in the photosynthetic chain and possibly in a chloroplast respiratory chain. The immediate electron acceptor for the enzyme in this species is believed to be plastoquinone. Couples the redox reaction to proton translocation, and thus conserves the redox energy in a proton gradient. This Arabis hirsuta (Hairy rock-cress) protein is NAD(P)H-quinone oxidoreductase subunit 3, chloroplastic.